A 218-amino-acid chain; its full sequence is Small ribosomal subunit protein uS3c (218 aa).

In terms of domain architecture, KH type-2 spans 43–118 (IKNYVQKNTR…KLNIAITRIG (76 aa)).

This sequence belongs to the universal ribosomal protein uS3 family. In terms of assembly, part of the 30S ribosomal subunit.

It is found in the plastid. It localises to the chloroplast. This is Small ribosomal subunit protein uS3c (rps3) from Gossypium barbadense (Sea Island cotton).